A 262-amino-acid chain; its full sequence is Carbohydrate deacetylase (262 aa).

Histidine 129 provides a ligand contact to Mg(2+).

The protein belongs to the YdjC deacetylase family. Homodimer. It depends on Mg(2+) as a cofactor.

Probably catalyzes the deacetylation of acetylated carbohydrates an important step in the degradation of oligosaccharides. The sequence is that of Carbohydrate deacetylase from Enterococcus faecalis (strain ATCC 700802 / V583).